Here is a 69-residue protein sequence, read N- to C-terminus: Brevinin-1Pb (69 aa).

The first 20 residues, 1–20, serve as a signal peptide directing secretion; it reads MFTLNKFLLLLFFLGTINLS. Residues 21-43 constitute a propeptide that is removed on maturation; it reads FCEEENAEEERIDEPDETDVEVE. C63 and C69 form a disulfide bridge.

In terms of tissue distribution, expressed by the skin glands.

It is found in the secreted. Its function is as follows. Antibacterial activity against Gram-positive bacterium S.aureus and Gram-negative bacterium E.coli. Has activity against C.albicans. This is Brevinin-1Pb from Lithobates pipiens (Northern leopard frog).